Here is a 786-residue protein sequence, read N- to C-terminus: Rho GTPase-activating protein 10 (786 aa).

One can recognise a BAR domain in the interval glutamate 7–arginine 262. Residues glutamine 265–alanine 372 form the PH domain. In terms of domain architecture, Rho-GAP spans alanine 389–phenylalanine 574. 2 disordered regions span residues threonine 576–lysine 608 and glutamate 621–serine 727. The span at glutamine 599 to lysine 608 shows a compositional bias: basic residues. The span at proline 634–valine 651 shows a compositional bias: low complexity. The segment covering isoleucine 676–leucine 688 has biased composition (polar residues). A compositionally biased stretch (low complexity) spans asparagine 689 to phenylalanine 712. Residues isoleucine 728 to leucine 786 form the SH3 domain.

In terms of assembly, interacts with PKN3. Interacts with caspase-activated PAK2 proteolytic fragment PAK-2p34; the interaction does not affect GRAF2/ARHGAP10 GTPase activation activity towards RHOA and CDC42. Interacts via its SH3 domain with PTK2/FAK1. Interacts with PTK2B/PYK2; the interaction negatively regulates GRAF2/ARHGAP10 GTPase-activating activity. Interacts with MICAL1 and WDR44; complex formation might transit from GRAF2/ARHGAP10-MICAL1 to GRAF2/ARHGAP10-WDR44 complexes. Phosphorylated. Phosphorylated in vitro by constitutive active PKN3. In terms of tissue distribution, high levels of expression in heart and skeletal muscle.

It localises to the cytoplasm. The protein localises to the perinuclear region. The protein resides in the cell membrane. It is found in the endosome membrane. Its function is as follows. GTPase-activating protein that catalyzes the conversion of active GTP-bound Rho GTPases to their inactive GDP-bound form, thus suppressing various Rho GTPase-mediated cellular processes. Also converts Cdc42 to an inactive GDP-bound state. Essential for PTKB2 regulation of cytoskeletal organization via Rho family GTPases. Inhibits PAK2 proteolytic fragment PAK-2p34 kinase activity and changes its localization from the nucleus to the perinuclear region. Stabilizes PAK-2p34 thereby increasing stimulation of cell death. Associates with MICAL1 on the endosomal membrane to promote Rab8-Rab10-dependent tubule extension. After dissociation with MICAL1, recruits WDR44 which connects the endoplasmic reticulum (ER) with the endosomal tubule, thereby participating in the export of a subset of neosynthesized proteins. This Homo sapiens (Human) protein is Rho GTPase-activating protein 10 (ARHGAP10).